The following is a 345-amino-acid chain: Very-long-chain 3-oxoacyl-CoA reductase (345 aa).

The helical transmembrane segment at 26-46 threads the bilayer; the sequence is GAAVLLATGGLFLASRVLTFV. NADP(+) contacts are provided by Val71, Asp125, Asp133, Asn152, Tyr219, Lys223, Ile252, and Ser254. The Proton donor role is filled by Tyr219. The Lowers pKa of active site Tyr role is filled by Lys223.

The protein belongs to the short-chain dehydrogenases/reductases (SDR) family.

Its subcellular location is the endoplasmic reticulum membrane. It carries out the reaction a very-long-chain (3R)-3-hydroxyacyl-CoA + NADP(+) = a very-long-chain 3-oxoacyl-CoA + NADPH + H(+). It functions in the pathway lipid metabolism; fatty acid biosynthesis. Its function is as follows. Component of the microsomal membrane bound fatty acid elongation system, which produces the 26-carbon very long-chain fatty acids (VLCFA) from palmitate. Catalyzes the reduction of the 3-ketoacyl-CoA intermediate that is formed in each cycle of fatty acid elongation. VLCFAs serve as precursors for ceramide and sphingolipids. In Aspergillus clavatus (strain ATCC 1007 / CBS 513.65 / DSM 816 / NCTC 3887 / NRRL 1 / QM 1276 / 107), this protein is Very-long-chain 3-oxoacyl-CoA reductase.